We begin with the raw amino-acid sequence, 245 residues long: Ribosomal RNA small subunit methyltransferase G (245 aa).

S-adenosyl-L-methionine contacts are provided by residues Gly80, Phe85, 103-105, 131-132, and Arg150; these read DAT and AE.

This sequence belongs to the methyltransferase superfamily. RNA methyltransferase RsmG family.

It localises to the cytoplasm. In terms of biological role, specifically methylates the N7 position of a guanine in 16S rRNA. This chain is Ribosomal RNA small subunit methyltransferase G, found in Deinococcus geothermalis (strain DSM 11300 / CIP 105573 / AG-3a).